A 71-amino-acid polypeptide reads, in one-letter code: Brevinin-1E (71 aa).

The N-terminal stretch at 1–22 (MFTLKKSMLLLFFLGTINLSLC) is a signal peptide. Positions 23–45 (EEERDADEEERRDNPDESEVEVE) are excised as a propeptide. C65 and C71 form a disulfide bridge.

The protein belongs to the frog skin active peptide (FSAP) family. Brevinin subfamily. In terms of tissue distribution, expressed by the skin glands.

The protein localises to the secreted. Shows antibacterial activity against representative Gram-negative and Gram-positive bacterial species, and a very high hemolytic activity. The polypeptide is Brevinin-1E (Pelophylax lessonae (Pool frog)).